Consider the following 439-residue polypeptide: Vacuolar zinc transporter COT1 (439 aa).

Residues 1–9 (MKLGSKQVK) lie on the Cytoplasmic side of the membrane. The chain crosses the membrane as a helical span at residues 10–30 (IISLLLLDTVFFGIEITTGYL). Topologically, residues 31–33 (SHS) are vacuolar. A helical membrane pass occupies residues 34–54 (LALIADSFHMLNDIISLVVAL). The Cytoplasmic portion of the chain corresponds to 55–76 (WAVNVAKNRNPDSTYTYGWKRA). Residues 77-97 (EILGALINAVFLIALCVSILI) form a helical membrane-spanning segment. At 98-113 (EALQRIIAPPVIENPK) the chain is on the vacuolar side. The chain crosses the membrane as a helical span at residues 114 to 134 (FVLYVGVAGLISNTVGLFLFH). At 135 to 244 (DNDQEHGHGH…RKRSLNMHGV (110 aa)) the chain is on the cytoplasmic side. 3 consecutive short sequence motifs (histidine repeat) follow at residues 140–144 (HGHGH), 165–169 (HTHAH), and 219–223 (SSHTI). Positions 207-230 (PENASKTPSYSTSSHTIASGGNYT) are enriched in polar residues. Positions 207-231 (PENASKTPSYSTSSHTIASGGNYTE) are disordered. Ser225 carries the phosphoserine modification. Residues 245 to 265 (FLHVLGDALGNIGVMLSAFFI) traverse the membrane as a helical segment. At 266–274 (WKTDYSWKY) the chain is on the vacuolar side. The chain crosses the membrane as a helical span at residues 275 to 295 (YTDPLVSLIITGIIFSSALPL). Residues 296–439 (SCKASKILLQ…CNTADCLEDH (144 aa)) are Cytoplasmic-facing. Lys301 is covalently cross-linked (Glycyl lysine isopeptide (Lys-Gly) (interchain with G-Cter in ubiquitin)). A compositionally biased stretch (basic and acidic residues) spans 388 to 402 (TSTERAGDSQGDHLQ). The interval 388-408 (TSTERAGDSQGDHLQNDPLSL) is disordered.

Belongs to the cation diffusion facilitator (CDF) transporter (TC 2.A.4) family. SLC30A subfamily.

Its subcellular location is the vacuole membrane. It carries out the reaction Zn(2+)(in) = Zn(2+)(out). In terms of biological role, vacuolar transporter that regulates zinc homeostasis by mediating zinc transport and storage into the vacuole. Plays a role in resistance to zinc shock resulting from sudden influx of zinc into cytoplasm. May also participate in the regulation of cobalt levels under normal physiological conditions and may be important in the supply of metal that is required for metalloenzyme or cofactor synthesis. Involved in the resistance to cobalt and rhodium ions. The sequence is that of Vacuolar zinc transporter COT1 from Saccharomyces cerevisiae (strain ATCC 204508 / S288c) (Baker's yeast).